Reading from the N-terminus, the 201-residue chain is Small ribosomal subunit protein uS4c (201 aa).

Residues 89–150 (MRLDNIVFRL…RQKSQAIITK (62 aa)) enclose the S4 RNA-binding domain.

The protein belongs to the universal ribosomal protein uS4 family. As to quaternary structure, part of the 30S ribosomal subunit. Contacts protein S5. The interaction surface between S4 and S5 is involved in control of translational fidelity.

It localises to the plastid. Its subcellular location is the chloroplast. One of the primary rRNA binding proteins, it binds directly to 16S rRNA where it nucleates assembly of the body of the 30S subunit. In terms of biological role, with S5 and S12 plays an important role in translational accuracy. The protein is Small ribosomal subunit protein uS4c (rps4) of Funaria hygrometrica (Moss).